A 156-amino-acid polypeptide reads, in one-letter code: ATP synthase subunit b (156 aa).

The chain crosses the membrane as a helical span at residues Ile3–Thr23.

The protein belongs to the ATPase B chain family. F-type ATPases have 2 components, F(1) - the catalytic core - and F(0) - the membrane proton channel. F(1) has five subunits: alpha(3), beta(3), gamma(1), delta(1), epsilon(1). F(0) has three main subunits: a(1), b(2) and c(10-14). The alpha and beta chains form an alternating ring which encloses part of the gamma chain. F(1) is attached to F(0) by a central stalk formed by the gamma and epsilon chains, while a peripheral stalk is formed by the delta and b chains.

The protein resides in the cell inner membrane. Functionally, f(1)F(0) ATP synthase produces ATP from ADP in the presence of a proton or sodium gradient. F-type ATPases consist of two structural domains, F(1) containing the extramembraneous catalytic core and F(0) containing the membrane proton channel, linked together by a central stalk and a peripheral stalk. During catalysis, ATP synthesis in the catalytic domain of F(1) is coupled via a rotary mechanism of the central stalk subunits to proton translocation. In terms of biological role, component of the F(0) channel, it forms part of the peripheral stalk, linking F(1) to F(0). This chain is ATP synthase subunit b, found in Xylella fastidiosa (strain M12).